We begin with the raw amino-acid sequence, 205 residues long: Cytochrome c biogenesis ATP-binding export protein CcmA 1 (205 aa).

Residues 2–205 (LEARDLYCER…LALTGGGAGL (204 aa)) form the ABC transporter domain. Residue 34–41 (GGNGAGKT) coordinates ATP.

Belongs to the ABC transporter superfamily. CcmA exporter (TC 3.A.1.107) family. As to quaternary structure, the complex is composed of two ATP-binding proteins (CcmA) and two transmembrane proteins (CcmB).

Its subcellular location is the cell inner membrane. It catalyses the reaction heme b(in) + ATP + H2O = heme b(out) + ADP + phosphate + H(+). Part of the ABC transporter complex CcmAB involved in the biogenesis of c-type cytochromes; once thought to export heme, this seems not to be the case, but its exact role is uncertain. Responsible for energy coupling to the transport system. The polypeptide is Cytochrome c biogenesis ATP-binding export protein CcmA 1 (Salmonella typhimurium (strain LT2 / SGSC1412 / ATCC 700720)).